The following is a 293-amino-acid chain: Probable aspartoacylase (293 aa).

Residues H14 and E17 each coordinate Zn(2+). Substrate-binding positions include R56 and 63–64 (NR). H106 serves as a coordination point for Zn(2+). Substrate-binding residues include E165 and Y276.

Belongs to the AspA/AstE family. Aspartoacylase subfamily. Requires Zn(2+) as cofactor.

It carries out the reaction an N-acyl-L-aspartate + H2O = a carboxylate + L-aspartate. This is Probable aspartoacylase from Trichodesmium erythraeum (strain IMS101).